Consider the following 218-residue polypeptide: Ribosomal RNA small subunit methyltransferase G (218 aa).

Residues Gly86, Leu91, 137-138 (AE), and Arg153 each bind S-adenosyl-L-methionine.

This sequence belongs to the methyltransferase superfamily. RNA methyltransferase RsmG family.

It is found in the cytoplasm. The catalysed reaction is guanosine(527) in 16S rRNA + S-adenosyl-L-methionine = N(7)-methylguanosine(527) in 16S rRNA + S-adenosyl-L-homocysteine. Its function is as follows. Specifically methylates the N7 position of guanine in position 527 of 16S rRNA. This is Ribosomal RNA small subunit methyltransferase G from Nitratidesulfovibrio vulgaris (strain ATCC 29579 / DSM 644 / CCUG 34227 / NCIMB 8303 / VKM B-1760 / Hildenborough) (Desulfovibrio vulgaris).